The chain runs to 68 residues: Probable tautomerase Cj0270 (68 aa).

Proline 2 functions as the Proton acceptor; via imino nitrogen in the catalytic mechanism.

It belongs to the 4-oxalocrotonate tautomerase family.

This chain is Probable tautomerase Cj0270, found in Campylobacter jejuni subsp. jejuni serotype O:2 (strain ATCC 700819 / NCTC 11168).